Consider the following 169-residue polypeptide: Glycine-rich RNA-binding protein GRP2A (169 aa).

Positions Tyr8–Ser86 constitute an RRM domain. 2 disordered regions span residues Met69–Gly100 and Tyr125–Trp169. Over residues Ser89–Gly100 the composition is skewed to gly residues.

Predominantly expressed in meristematic and growing tissue.

Its subcellular location is the nucleus. Functionally, may play a general role in circadian phenomena associated with meristematic tissue. This is Glycine-rich RNA-binding protein GRP2A from Sinapis alba (White mustard).